The chain runs to 323 residues: Aspartate carbamoyltransferase catalytic subunit (323 aa).

Carbamoyl phosphate-binding residues include Arg71 and Thr72. Position 99 (Lys99) interacts with L-aspartate. Carbamoyl phosphate-binding residues include Arg121, His151, and Gln154. L-aspartate-binding residues include Arg184 and Arg239. Carbamoyl phosphate-binding residues include Gly280 and Pro281.

The protein belongs to the aspartate/ornithine carbamoyltransferase superfamily. ATCase family. As to quaternary structure, heterododecamer (2C3:3R2) of six catalytic PyrB chains organized as two trimers (C3), and six regulatory PyrI chains organized as three dimers (R2).

It carries out the reaction carbamoyl phosphate + L-aspartate = N-carbamoyl-L-aspartate + phosphate + H(+). It functions in the pathway pyrimidine metabolism; UMP biosynthesis via de novo pathway; (S)-dihydroorotate from bicarbonate: step 2/3. In terms of biological role, catalyzes the condensation of carbamoyl phosphate and aspartate to form carbamoyl aspartate and inorganic phosphate, the committed step in the de novo pyrimidine nucleotide biosynthesis pathway. This Ralstonia pickettii (strain 12J) protein is Aspartate carbamoyltransferase catalytic subunit.